A 293-amino-acid polypeptide reads, in one-letter code: MNKEQLQQMRQAPGFVGALDQSGGSTPKALKAYGIQPDAYQSEEEMFDLIHQMRTRMITSPAFATGKIIGVILFERTMRGKIEGMPTADFLWEKRHIVPFLKVDKGLQDEANGVQLMKPFPELGKLCEEAVGYHVFGTKMRSVIKQANEQGIRDIVEQQFQWGKEILSHGLVPILEPEVDIHCPEKAKAEEILKRELLAQLDKMTEPVMLKITIPTVDNFYKEIIEHPMMLRVVALSGGYSREQANELLSRNHGVIASFSRALVEGLSVQQTDAEFNAMLEASIEDVYQASIK.

The active-site Proton acceptor is E176. The active-site Schiff-base intermediate with dihydroxyacetone-P is the K211.

This sequence belongs to the class I fructose-bisphosphate aldolase family.

The catalysed reaction is beta-D-fructose 1,6-bisphosphate = D-glyceraldehyde 3-phosphate + dihydroxyacetone phosphate. It functions in the pathway carbohydrate degradation; glycolysis; D-glyceraldehyde 3-phosphate and glycerone phosphate from D-glucose: step 4/4. The chain is Fructose-bisphosphate aldolase class 1 from Porphyromonas gingivalis (strain ATCC 33277 / DSM 20709 / CIP 103683 / JCM 12257 / NCTC 11834 / 2561).